The sequence spans 1040 residues: MSRRNATSFVDNNTLTSSGISGSGSMSPPITSRPASGQASPLTSNGSLSPPQYADDQGSVSYNLDSPRDLSPLLLSELACLNMREVVARPGLGTIGRQIPVKSNFFAMDLKNPKMVVIQYHVEIHHPGCRKLDKDEMRIIFWKAVSDHPNIFHNKFALAYDGAHQLYTVARLEFPDDQGSVRLDCEASLPKDNRDRTRCAISIQNVGPVLLEMQRTRTNNLDERVLTPIQILDIICRQSLTCPLLKNSANFYTWKSSCYRIPTAAGQALDLEGGKEMWTGFFSSAHIASNYRPLLNIDVAHTAFYKTRITVLQFMCDVLNERTSKPNRNNPRGPGGPGGPGGYRGGRGGGRGGSYGNFGNRGPPGANVRDDFGGNGLTFTMDTLSRDTQLSSFETRIFGDAIRGMKIRAAHRPNAIRVYKVNSLQLPADKLMFQGIDEEGRQVVCSVADYFSEKYGPLKYPKLPCLHVGPPTRNIFLPMEHCLIDSPQKYNKKMSEKQTSAIIKAAAVDATQREDRIKQLAAQASFGTDPFLKEFGVAVSSQMIQTTARVIQPPPIMFGGNNRSVNPVVFPKDGSWTMDNQTLYMPATCRSYSMIALVDPRDQTSLQTFCQSLTMKATAMGMNFPRWPDLVKYGRSKEDVCTLFTEIADEYRVTNTVCDCIIVVLQSKNSDIYMTVKEQSDIVHGIMSQCVLMKNVSRPTPATCANIVLKLNMKMGGINSRIVADKITNKYLVDQPTMVVGIDVTHPTQAEMRMNMPSVAAIVANVDLLPQSYGANVKVQKKCRESVVYLLDAIRERIITFYRHTKQKPARIIVYRDGVSEGQFSEVLREEIQSIRTACLAIAEDFRPPITYIVVQKRHHARIFCKYQNDMVGKAKNVPPGTTVDTGIVSPEGFDFYLCSHYGVQGTSRPARYHVLLDECKFTADEIQSITYGMCHTYGRCTRSVSIPTPVYYADLVATRARCHVKRKLGLADNNDCDTNSRSSTLASLLNVRTGSGKGKKSYAPSVDDESYSLSDATSDQILQDCVSVATDFKSRMYFI.

Over residues M1–L15 the composition is skewed to polar residues. Disordered regions lie at residues M1–S61 and R322–N367. Positions T16–S32 are enriched in low complexity. A compositionally biased stretch (polar residues) spans R33–P50. Over residues G333–G356 the composition is skewed to gly residues. The PAZ domain maps to F379–S486. One can recognise a Piwi domain in the interval C660–K966.

This Caenorhabditis elegans protein is Putative protein tag-76 (tag-76).